Consider the following 132-residue polypeptide: Antimicrobial protein Ace-AMP1 (132 aa).

Positions 1 to 27 (MVRVVSLLAASTFILLIMIISSPYANS) are cleaved as a signal peptide. 4 cysteine pairs are disulfide-bonded: C31–C76, C41–C54, C55–C100, and C74–C116.

Belongs to the plant LTP family. Highly divergent. Monomer.

Its function is as follows. Antifungal and antibacterial activity against the Gram-positive bacteria B.megaterium and S.lutea. This is Antimicrobial protein Ace-AMP1 from Allium cepa (Onion).